The chain runs to 290 residues: GTPase Era (290 aa).

Residues 2–169 (KSGFVSIIGR…KDKIYENLNE (168 aa)) form the Era-type G domain. The G1 stretch occupies residues 10–17 (GRPSTGKS). Residue 10-17 (GRPSTGKS) participates in GTP binding. Positions 36–40 (QTTRN) are G2. A G3 region spans residues 57–60 (DTPG). GTP-binding positions include 57–61 (DTPGF) and 119–122 (NKID). The segment at 119-122 (NKID) is G4. The interval 148 to 150 (ISA) is G5. The region spanning 200-276 (LKEELPYSIY…NLFLQVKLRK (77 aa)) is the KH type-2 domain.

This sequence belongs to the TRAFAC class TrmE-Era-EngA-EngB-Septin-like GTPase superfamily. Era GTPase family. As to quaternary structure, monomer.

Its subcellular location is the cytoplasm. It is found in the cell inner membrane. In terms of biological role, an essential GTPase that binds both GDP and GTP, with rapid nucleotide exchange. Plays a role in 16S rRNA processing and 30S ribosomal subunit biogenesis and possibly also in cell cycle regulation and energy metabolism. The polypeptide is GTPase Era (Borrelia duttonii (strain Ly)).